The chain runs to 239 residues: Probable fimbrial chaperone YehC (239 aa).

An N-terminal signal peptide occupies residues 1-31 (MAAIPWRPFNLRGIKMKGLLSLLIFSMVLPA).

The protein belongs to the periplasmic pilus chaperone family.

It is found in the periplasm. Functionally, part of the yehABCD fimbrial operon. Could contribute to adhesion to various surfaces in specific environmental niches. This is Probable fimbrial chaperone YehC (yehC) from Escherichia coli (strain K12).